Consider the following 289-residue polypeptide: Stress response regulator protein 1 (289 aa).

The interval leucine 77 to phenylalanine 136 is disordered. Positions glutamate 83 to asparagine 98 are enriched in acidic residues. Polar residues predominate over residues proline 127–phenylalanine 136. The 119-residue stretch at asparagine 163–glutamate 281 folds into the Response regulatory domain. Aspartate 214 carries the post-translational modification 4-aspartylphosphate.

Its function is as follows. Required for stress adaptation, morphogenesis and virulence. The sequence is that of Stress response regulator protein 1 (SRR1) from Scheffersomyces stipitis (strain ATCC 58785 / CBS 6054 / NBRC 10063 / NRRL Y-11545) (Yeast).